The following is a 248-amino-acid chain: Homeotic protein ultrabithorax (248 aa).

Over residues 116–125 (GTGGGGGGSA) the composition is skewed to gly residues. The disordered stretch occupies residues 116 to 191 (GTGGGGGGSA…GSAGVVGGAG (76 aa)). Over residues 126–139 (GSANGANNTANGQN) the composition is skewed to low complexity. 2 stretches are compositionally biased toward gly residues: residues 140–152 (TSGG…GGGM) and 182–191 (GSAGVVGGAG). The Antp-type hexapeptide signature appears at 241 to 246 (FYPWMA).

It belongs to the Antp homeobox family.

It is found in the nucleus. Sequence-specific transcription factor which is part of a developmental regulatory system that provides cells with specific positional identities on the anterior-posterior axis. Binds the consensus region 5'-TTAAT[GT][GA]-3'. The chain is Homeotic protein ultrabithorax (Ubx) from Musca domestica (House fly).